We begin with the raw amino-acid sequence, 141 residues long: Nucleoside diphosphate kinase (141 aa).

ATP is bound by residues lysine 11, phenylalanine 59, arginine 87, threonine 93, arginine 104, and asparagine 114. Histidine 117 acts as the Pros-phosphohistidine intermediate in catalysis.

It belongs to the NDK family. Homotetramer. The cofactor is Mg(2+).

It is found in the cytoplasm. It carries out the reaction a 2'-deoxyribonucleoside 5'-diphosphate + ATP = a 2'-deoxyribonucleoside 5'-triphosphate + ADP. The enzyme catalyses a ribonucleoside 5'-diphosphate + ATP = a ribonucleoside 5'-triphosphate + ADP. Major role in the synthesis of nucleoside triphosphates other than ATP. The ATP gamma phosphate is transferred to the NDP beta phosphate via a ping-pong mechanism, using a phosphorylated active-site intermediate. This Haemophilus influenzae (strain 86-028NP) protein is Nucleoside diphosphate kinase.